Reading from the N-terminus, the 561-residue chain is 2-succinyl-5-enolpyruvyl-6-hydroxy-3-cyclohexene-1-carboxylate synthase (561 aa).

This sequence belongs to the TPP enzyme family. MenD subfamily. Homodimer. Mg(2+) is required as a cofactor. The cofactor is Mn(2+). It depends on thiamine diphosphate as a cofactor.

It catalyses the reaction isochorismate + 2-oxoglutarate + H(+) = 5-enolpyruvoyl-6-hydroxy-2-succinyl-cyclohex-3-ene-1-carboxylate + CO2. It participates in quinol/quinone metabolism; 1,4-dihydroxy-2-naphthoate biosynthesis; 1,4-dihydroxy-2-naphthoate from chorismate: step 2/7. It functions in the pathway quinol/quinone metabolism; menaquinone biosynthesis. In terms of biological role, catalyzes the thiamine diphosphate-dependent decarboxylation of 2-oxoglutarate and the subsequent addition of the resulting succinic semialdehyde-thiamine pyrophosphate anion to isochorismate to yield 2-succinyl-5-enolpyruvyl-6-hydroxy-3-cyclohexene-1-carboxylate (SEPHCHC). In Proteus mirabilis (strain HI4320), this protein is 2-succinyl-5-enolpyruvyl-6-hydroxy-3-cyclohexene-1-carboxylate synthase.